A 269-amino-acid polypeptide reads, in one-letter code: Cytochrome c oxidase subunit 3 (269 aa).

Helical transmembrane passes span 24-44 (LFTS…MHGF), 46-66 (GFQY…GLWF), 90-110 (GVGL…WAFF), 138-160 (PLLN…HSLI), 167-187 (ALYG…FQGV), 207-227 (FGTG…AVGL), and 247-267 (ILYW…VYYW).

It belongs to the cytochrome c oxidase subunit 3 family. In terms of assembly, component of the cytochrome c oxidase (complex IV, CIV), a multisubunit enzyme composed of a catalytic core of 3 subunits and several supernumerary subunits. The complex exists as a monomer or a dimer and forms supercomplexes (SCs) in the inner mitochondrial membrane with ubiquinol-cytochrome c oxidoreductase (cytochrome b-c1 complex, complex III, CIII).

The protein resides in the mitochondrion inner membrane. The enzyme catalyses 4 Fe(II)-[cytochrome c] + O2 + 8 H(+)(in) = 4 Fe(III)-[cytochrome c] + 2 H2O + 4 H(+)(out). Its function is as follows. Component of the cytochrome c oxidase, the last enzyme in the mitochondrial electron transport chain which drives oxidative phosphorylation. The respiratory chain contains 3 multisubunit complexes succinate dehydrogenase (complex II, CII), ubiquinol-cytochrome c oxidoreductase (cytochrome b-c1 complex, complex III, CIII) and cytochrome c oxidase (complex IV, CIV), that cooperate to transfer electrons derived from NADH and succinate to molecular oxygen, creating an electrochemical gradient over the inner membrane that drives transmembrane transport and the ATP synthase. Cytochrome c oxidase is the component of the respiratory chain that catalyzes the reduction of oxygen to water. Electrons originating from reduced cytochrome c in the intermembrane space (IMS) are transferred via the dinuclear copper A center (CU(A)) of subunit 2 and heme A of subunit 1 to the active site in subunit 1, a binuclear center (BNC) formed by heme A3 and copper B (CU(B)). The BNC reduces molecular oxygen to 2 water molecules using 4 electrons from cytochrome c in the IMS and 4 protons from the mitochondrial matrix. This Emericella nidulans (Aspergillus nidulans) protein is Cytochrome c oxidase subunit 3 (cox3).